Reading from the N-terminus, the 476-residue chain is Probable cytosolic Fe-S cluster assembly factor GF22738 (476 aa).

The [4Fe-4S] cluster site is built by Cys-23, Cys-68, Cys-71, Cys-74, Cys-187, Cys-243, Cys-395, and Cys-399.

Belongs to the NARF family.

Its function is as follows. Component of the cytosolic iron-sulfur (Fe/S) protein assembly machinery. Required for maturation of extramitochondrial Fe/S proteins. The polypeptide is Probable cytosolic Fe-S cluster assembly factor GF22738 (Drosophila ananassae (Fruit fly)).